The chain runs to 322 residues: Aspartate--ammonia ligase (322 aa).

The protein belongs to the class-II aminoacyl-tRNA synthetase family. AsnA subfamily.

The protein resides in the cytoplasm. The enzyme catalyses L-aspartate + NH4(+) + ATP = L-asparagine + AMP + diphosphate + H(+). Its pathway is amino-acid biosynthesis; L-asparagine biosynthesis; L-asparagine from L-aspartate (ammonia route): step 1/1. In Lactiplantibacillus plantarum (strain ATCC BAA-793 / NCIMB 8826 / WCFS1) (Lactobacillus plantarum), this protein is Aspartate--ammonia ligase.